We begin with the raw amino-acid sequence, 30 residues long: MPIIGVPRCLENPFCAPAKFPLSVKKKIRI.

The protein belongs to the UPF0377 family.

The sequence is that of Putative UPF0377 protein YNR075C-A from Saccharomyces cerevisiae (strain ATCC 204508 / S288c) (Baker's yeast).